The following is a 357-amino-acid chain: DNA integrity scanning protein DisA (357 aa).

Residues 8-146 (VKSMINILQL…GNLRYTLKDI (139 aa)) enclose the DAC domain. ATP contacts are provided by residues glycine 75, leucine 93, and 106-110 (MRHRT).

It belongs to the DisA family. In terms of assembly, homooctamer. Mg(2+) serves as cofactor.

It carries out the reaction 2 ATP = 3',3'-c-di-AMP + 2 diphosphate. Participates in a DNA-damage check-point that is active prior to asymmetric division when DNA is damaged. DisA forms globular foci that rapidly scan along the chromosomes during sporulation, searching for lesions. When a lesion is present, DisA pauses at the lesion site. This triggers a cellular response that culminates in a temporary block in sporulation initiation. In terms of biological role, also has diadenylate cyclase activity, catalyzing the condensation of 2 ATP molecules into cyclic di-AMP (c-di-AMP). c-di-AMP acts as a signaling molecule that couples DNA integrity with progression of sporulation. The rise in c-di-AMP level generated by DisA while scanning the chromosome, operates as a positive signal that advances sporulation; upon encountering a lesion, the DisA focus arrests at the damaged site and halts c-di-AMP synthesis. The sequence is that of DNA integrity scanning protein DisA from Bacillus cereus (strain G9842).